We begin with the raw amino-acid sequence, 493 residues long: MHTLVFLSTRQVLQCQPAACQALPLLPRELFPLLFKVAFMDKKTAVLRELVHTWPFPLLSFQQLLQECAHCSRALLQERLSTESMQAVILGLTARIHAREAEAGTQPVCRKHTLRVLDMTGLLDDGVEQDPGTMSMWDCTAAVARTCIAQQQVGTAKPGLSPVPVEIRVDLRVNRASYTFLREALQSSVDSLLRLCCRDLRAEDLPMRNTVALLQLLDAGCLRRIDLRFNNLGLRGLSVIIPHVARFQHLASLRLHYVHGDSRQPSVDGEDNFRYFLAQMGRFICLRELSIGSSLLSGRLDQLLSTLQRPLESLELAFCALLPEDLRFLAQSSHAAHLKKLDLSGNDLSGNQLTPFQGLLQAVAATLLHLELTECQIADAQLLATLPTLTRCASLRYLGLYGNPLSMAGLKELLRDSVIQAELRTVVHPFPVDCYEGLPWPPPASVLLEASINEEKFARVEAELHQLLLASGRAHVLWTTDIYGRLAADYFNL.

Residues 111 to 146 (KHTLRVLDMTGLLDDGVEQDPGTMSMWDCTAAVART) form an LRR 1; degenerate repeat. The stretch at 194–218 (RLCCRDLRAEDLPMRNTVALLQLLD) is one LRR 2; degenerate repeat. The stretch at 219–246 (AGCLRRIDLRFNNLGLRGLSVIIPHVAR) is one LRR 3; degenerate repeat. Residues 247 to 282 (FQHLASLRLHYVHGDSRQPSVDGEDNFRYFLAQMGR) form an LRR 4; degenerate repeat. LRR repeat units follow at residues 283-307 (FICL…LSTL), 308-339 (QRPL…AHLK), 340-360 (KLDL…QGLL), 364-391 (AATL…TLTR), and 392-416 (CASL…LLRD).

Belongs to the PRAME family. LRRC14 subfamily. As to quaternary structure, interacts with IKBKB; disrupts IKBKB-IKBKG interaction preventing I-kappa-B-kinase (IKK) core complex formation and leading to a decrease of IKBKB phosphorylation and NF-kappaB activation. Interacts with CHUK.

The protein resides in the cytoplasm. Functionally, negatively regulates Toll-like receptor-mediated NF-kappa-B signaling by disrupting IKK core complex formation through interaction with IKBKB. This is Leucine-rich repeat-containing protein 14 from Rattus norvegicus (Rat).